The following is a 228-amino-acid chain: Growth arrest-specific protein 1 homolog (228 aa).

The N-terminal stretch at 1 to 17 (MRRVILPLVMTVTLCLA) is a signal peptide. N-linked (GlcNAc...) asparagine glycans are attached at residues N143 and N156. The GPI-anchor amidated aspartate moiety is linked to residue D205. The propeptide at 206–228 (SSVGHGFNILSAISVYLLTVLVF) is removed in mature form.

In terms of tissue distribution, pharynx muscle cells from its early formation, in the two-fold embryo, until the adult stage.

It is found in the cell membrane. In terms of biological role, role in pharynx function or development. The polypeptide is Growth arrest-specific protein 1 homolog (phg-1) (Caenorhabditis elegans).